Here is a 2159-residue protein sequence, read N- to C-terminus: Autophagy-related protein 2 (2159 aa).

Disordered stretches follow at residues 98 to 126 (KGAN…PALP), 292 to 403 (LSPA…DIDS), 428 to 475 (DHEG…LGFN), 490 to 552 (TMLP…NEEA), 585 to 612 (GGWA…AGRE), 624 to 682 (VPLD…TASA), 726 to 766 (FDGH…RTPV), and 980 to 1001 (TVTS…TPIG). 2 stretches are compositionally biased toward basic and acidic residues: residues 300–315 (DISE…RSSE) and 380–401 (GRFD…HEDI). 3 stretches are compositionally biased toward polar residues: residues 449–475 (PSEN…LGFN), 507–517 (HSQPTLPSSTA), and 540–549 (ADSSVSSTLN). Composition is skewed to polar residues over residues 630 to 642 (SDTT…TILP) and 669 to 681 (QASS…STAS). A compositionally biased stretch (basic and acidic residues) spans 728-737 (GHSDSSRSRT).

The protein belongs to the ATG2 family.

The protein localises to the preautophagosomal structure membrane. It is found in the endoplasmic reticulum membrane. The enzyme catalyses a 1,2-diacyl-sn-glycero-3-phosphocholine(in) = a 1,2-diacyl-sn-glycero-3-phosphocholine(out). It carries out the reaction a 1,2-diacyl-sn-glycero-3-phospho-L-serine(in) = a 1,2-diacyl-sn-glycero-3-phospho-L-serine(out). It catalyses the reaction a 1,2-diacyl-sn-glycero-3-phosphoethanolamine(in) = a 1,2-diacyl-sn-glycero-3-phosphoethanolamine(out). Functionally, lipid transfer protein required for autophagosome completion and peroxisome degradation. Tethers the edge of the isolation membrane (IM) to the endoplasmic reticulum (ER) and mediates direct lipid transfer from ER to IM for IM expansion. Atg2 binds to the ER exit site (ERES), which is the membrane source for autophagosome formation, using basic residues in its N-terminal region (NR) and to the expanding edge of the IM through its C-terminal region. The latter binding is assisted by an atg18-PtdIns3P interaction. Atg2 then extracts phospholipids from the membrane source using its NR and transfers them to atg9 to the IM through its predicted beta-sheet-rich structure for membrane expansion. In Sclerotinia sclerotiorum (strain ATCC 18683 / 1980 / Ss-1) (White mold), this protein is Autophagy-related protein 2 (atg2).